The following is a 433-amino-acid chain: 3-phosphoshikimate 1-carboxyvinyltransferase (433 aa).

The 3-phosphoshikimate site is built by K22, S23, and R27. K22 contacts phosphoenolpyruvate. The phosphoenolpyruvate site is built by G95 and R123. Positions 167, 169, 315, and 342 each coordinate 3-phosphoshikimate. Q169 provides a ligand contact to phosphoenolpyruvate. D315 acts as the Proton acceptor in catalysis. Residues R346 and R387 each coordinate phosphoenolpyruvate.

Belongs to the EPSP synthase family. In terms of assembly, monomer.

The protein resides in the cytoplasm. The enzyme catalyses 3-phosphoshikimate + phosphoenolpyruvate = 5-O-(1-carboxyvinyl)-3-phosphoshikimate + phosphate. The protein operates within metabolic intermediate biosynthesis; chorismate biosynthesis; chorismate from D-erythrose 4-phosphate and phosphoenolpyruvate: step 6/7. Functionally, catalyzes the transfer of the enolpyruvyl moiety of phosphoenolpyruvate (PEP) to the 5-hydroxyl of shikimate-3-phosphate (S3P) to produce enolpyruvyl shikimate-3-phosphate and inorganic phosphate. In Legionella pneumophila (strain Corby), this protein is 3-phosphoshikimate 1-carboxyvinyltransferase.